Here is a 149-residue protein sequence, read N- to C-terminus: CyanoQ (149 aa).

Residues 1–21 (MSRLRSLLSLILVLVTTVLVS) form the signal peptide. C22 is lipidated: N-palmitoyl cysteine. C22 carries the S-diacylglycerol cysteine lipid modification.

It belongs to the PsbQ family. CyanoQ subfamily. PSII is composed of 1 copy each of membrane proteins PsbA, PsbB, PsbC, PsbD, PsbE, PsbF, PsbH, PsbI, PsbJ, PsbK, PsbL, PsbM, PsbT, PsbX, PsbY, PsbZ, Psb30/Ycf12, peripheral proteins PsbO, CyanoQ (PsbQ), PsbU, PsbV and a large number of cofactors. It forms dimeric complexes. Pull-down experiments with His-tagged PsbQ pull down dimeric, but not monomeric, PSII. In terms of processing, the N-terminus is blocked. Upon expression in E.coli the N-terminus is modified with a diacylglycerol and an acyl group bound to two palmitates and one palmitoleate.

Its subcellular location is the cellular thylakoid membrane. Functionally, one of the extrinsic, lumenal subunits of photosystem II (PSII), which stabilize and protect the oxygen-evolving complex. PSII is a light-driven water plastoquinone oxidoreductase, using light energy to abstract electrons from H(2)O, generating a proton gradient subsequently used for ATP formation. Plays a role in the stability of the oxygen-evolving center on the luminal side of PSII. Required for optimal photoautotrophic growth in the absence of Ca(2+) or Cl(-), functions in optimizing PSII water oxidation/O(2) evolving activity. Requires PsbO to bind to PSII. This is CyanoQ from Synechocystis sp. (strain ATCC 27184 / PCC 6803 / Kazusa).